Reading from the N-terminus, the 107-residue chain is UPF0145 protein YbjQ (107 aa).

It belongs to the UPF0145 family.

The protein is UPF0145 protein YbjQ of Salmonella dublin (strain CT_02021853).